Here is a 155-residue protein sequence, read N- to C-terminus: Small ribosomal subunit protein uS7cz/uS7cy (155 aa).

The protein belongs to the universal ribosomal protein uS7 family. Part of the 30S ribosomal subunit.

The protein localises to the plastid. It is found in the chloroplast. One of the primary rRNA binding proteins, it binds directly to 16S rRNA where it nucleates assembly of the head domain of the 30S subunit. The protein is Small ribosomal subunit protein uS7cz/uS7cy (rps7-A) of Citrus sinensis (Sweet orange).